Here is a 318-residue protein sequence, read N- to C-terminus: Transcription factor MYBS3 (318 aa).

Disordered regions lie at residues 1-20 (MTRRCSHCSHNGHNSRTCPN) and 50-98 (AAGS…PWTE). The CCHC-type zinc-finger motif lies at 3 to 20 (RRCSHCSHNGHNSRTCPN). A compositionally biased stretch (polar residues) spans 8–18 (CSHNGHNSRTC). Low complexity predominate over residues 50–77 (AAGSTSGGASPADGPDAAPTAADGYASD). One can recognise an HTH myb-type domain in the interval 88–144 (RDRKKGVPWTEEEHRRFLLGLQKLGKGDWRGISRNFVVSRTPTQVASHAQKYFIRQS). The H-T-H motif DNA-binding region spans 116-140 (WRGISRNFVVSRTPTQVASHAQKYF). The interval 159–200 (VPDESMDLPPLPGGQEPETQVLNQPALPPPREEEEVDSMESD) is disordered.

As to expression, expressed in all tissues, with the highest level in senescent leaves.

It is found in the nucleus. Transcription repressor that binds to 5'-TATCCA-3' elements in gene promoters. Contributes to the sugar-repressed transcription of promoters containing SRS or 5'-TATCCA-3' elements. Transcription repressor involved in a cold stress response pathway that confers cold tolerance. Suppresses the DREB1-dependent signaling pathway under prolonged cold stress. DREB1 responds quickly and transiently while MYBS3 responds slowly to cold stress. They may act sequentially and complementarily for adaptation to short- and long-term cold stress. The chain is Transcription factor MYBS3 from Oryza sativa subsp. japonica (Rice).